The chain runs to 363 residues: Cytochrome b (363 aa).

Helical transmembrane passes span 23 to 43 (VGFI…LLTF), 67 to 89 (WFVR…IHII), 102 to 122 (SWYS…TGYV), and 164 to 184 (FFIL…LHLY). 2 residues coordinate heme b: H73 and H87. Residues H168 and H182 each coordinate heme b. Position 187 (H187) interacts with a ubiquinone. 4 consecutive transmembrane segments (helical) span residues 210–230 (ILFS…PQVG), 271–291 (VFPT…LLII), 309–329 (RVWT…GCIG), and 332–352 (VINL…TTFV).

It belongs to the cytochrome b family. The main subunits of complex b-c1 are: cytochrome b, cytochrome c1 and the Rieske protein. Requires heme b as cofactor.

It is found in the mitochondrion inner membrane. Functionally, component of the ubiquinol-cytochrome c reductase complex (complex III or cytochrome b-c1 complex) that is part of the mitochondrial respiratory chain. The b-c1 complex mediates electron transfer from ubiquinol to cytochrome c. Contributes to the generation of a proton gradient across the mitochondrial membrane that is then used for ATP synthesis. This Theileria parva (East coast fever infection agent) protein is Cytochrome b (MT-CYB).